Here is a 206-residue protein sequence, read N- to C-terminus: Putative 3-methyladenine DNA glycosylase (206 aa).

It belongs to the DNA glycosylase MPG family.

The chain is Putative 3-methyladenine DNA glycosylase from Rhodopseudomonas palustris (strain ATCC BAA-98 / CGA009).